The sequence spans 111 residues: Cytochrome b-c1 complex subunit 7 (111 aa).

At Ala-2 the chain carries N-acetylalanine. Position 19 is an N6-acetyllysine (Lys-19). At Lys-78 the chain carries N6-acetyllysine; alternate. An N6-succinyllysine; alternate modification is found at Lys-78. Lys-83 is modified (N6-acetyllysine). Residue Lys-88 is modified to N6-acetyllysine; alternate. Lys-88 bears the N6-succinyllysine; alternate mark. An N6-acetyllysine modification is found at Lys-96.

Belongs to the UQCRB/QCR7 family. In terms of assembly, component of the ubiquinol-cytochrome c oxidoreductase (cytochrome b-c1 complex, complex III, CIII), a multisubunit enzyme composed of 11 subunits. The complex is composed of 3 respiratory subunits cytochrome b, cytochrome c1 and Rieske protein UQCRFS1, 2 core protein subunits UQCRC1/QCR1 and UQCRC2/QCR2, and 6 low-molecular weight protein subunits UQCRH/QCR6, UQCRB/QCR7, UQCRQ/QCR8, UQCR10/QCR9, UQCR11/QCR10 and subunit 9, the cleavage product of Rieske protein UQCRFS1. The complex exists as an obligatory dimer and forms supercomplexes (SCs) in the inner mitochondrial membrane with NADH-ubiquinone oxidoreductase (complex I, CI) and cytochrome c oxidase (complex IV, CIV), resulting in different assemblies (supercomplex SCI(1)III(2)IV(1) and megacomplex MCI(2)III(2)IV(2)).

It localises to the mitochondrion inner membrane. Functionally, component of the ubiquinol-cytochrome c oxidoreductase, a multisubunit transmembrane complex that is part of the mitochondrial electron transport chain which drives oxidative phosphorylation. The respiratory chain contains 3 multisubunit complexes succinate dehydrogenase (complex II, CII), ubiquinol-cytochrome c oxidoreductase (cytochrome b-c1 complex, complex III, CIII) and cytochrome c oxidase (complex IV, CIV), that cooperate to transfer electrons derived from NADH and succinate to molecular oxygen, creating an electrochemical gradient over the inner membrane that drives transmembrane transport and the ATP synthase. The cytochrome b-c1 complex catalyzes electron transfer from ubiquinol to cytochrome c, linking this redox reaction to translocation of protons across the mitochondrial inner membrane, with protons being carried across the membrane as hydrogens on the quinol. In the process called Q cycle, 2 protons are consumed from the matrix, 4 protons are released into the intermembrane space and 2 electrons are passed to cytochrome c. The polypeptide is Cytochrome b-c1 complex subunit 7 (UQCRB) (Bos taurus (Bovine)).